The following is a 538-amino-acid chain: MGKKSKAQSDNVSQPGKTDVTLPFLGGKAAIDPTVASLFEKSAGPVKAPSVQPIITQRKENGPEDDVEKEEDDEEISELEEDLQSEDEDMQDVSEVAGDAERTLAVDTQAPSSKKRKRAPAEDLEETYMRRIAKEEQKEQEKRRAEKAKRQKVEEGGKDSDPVSDKSKDGRDESSEEEDEITVPRHETQSGDPESKELEKSNRTVFLGNVSSQAIKSKSAKKTLLKHLASFLSTLPESTGPHKVESIRFRSVAFASGGKVPKRAAFARREILDDTTPSTNAYVVYSTVQAARKAPAALNGTVVLDRHLRVDSVAHPSQIDHKRCVFVGNLDFVDNETDPEEDDKKKKKKKSGPADVEEGLWRTFNAHTKGSKERASTRGNVESVRVVRDRTTRVGKGFAYVQFYDQVCVEEALLLDGKKFPPMLPRKLRVTRAKKLPKKRDGPETGSHGKALGEGFSTLQGRAGKLFGRAGAAKMKAEGRKSISGNSVVFEGNRASEGSSRIKIKTKSRGSKGKPKNRSAKRAAAYQAAGGRKGKMAK.

5 disordered regions span residues 1-25 (MGKKSKAQSDNVSQPGKTDVTLPFL), 41-203 (KSAG…KSNR), 336-378 (ETDP…ASTR), 433-455 (AKKLPKKRDGPETGSHGKALGEG), and 476-538 (KAEG…KMAK). Residues 63–92 (PEDDVEKEEDDEEISELEEDLQSEDEDMQD) are compositionally biased toward acidic residues. Residues 64–156 (EDDVEKEEDD…KAKRQKVEEG (93 aa)) adopt a coiled-coil conformation. 3 stretches are compositionally biased toward basic and acidic residues: residues 127–144 (TYMRRIAKEEQKEQEKRR), 151–173 (QKVEEGGKDSDPVSDKSKDGRDE), and 182–202 (TVPRHETQSGDPESKELEKSN). 2 consecutive RRM domains span residues 203–315 (RTVF…SVAH) and 323–435 (RCVF…RAKK). Basic residues predominate over residues 502–521 (IKIKTKSRGSKGKPKNRSAK).

This sequence belongs to the RRM RBM34 family.

It is found in the nucleus. It localises to the nucleolus. Its function is as follows. Involved in pre-25S rRNA processing. In Aspergillus fumigatus (strain ATCC MYA-4609 / CBS 101355 / FGSC A1100 / Af293) (Neosartorya fumigata), this protein is Nucleolar protein 12 (nop12).